Here is a 444-residue protein sequence, read N- to C-terminus: CCA-adding enzyme (444 aa).

The ATP site is built by serine 57 and arginine 60. CTP-binding residues include serine 57 and arginine 60. 3 residues coordinate Mg(2+): aspartate 69, aspartate 71, and aspartate 124. Residues histidine 147, lysine 168, and tyrosine 177 each contribute to the ATP site. 3 residues coordinate CTP: histidine 147, lysine 168, and tyrosine 177.

It belongs to the tRNA nucleotidyltransferase/poly(A) polymerase family. Archaeal CCA-adding enzyme subfamily. As to quaternary structure, homodimer. It depends on Mg(2+) as a cofactor.

It carries out the reaction a tRNA precursor + 2 CTP + ATP = a tRNA with a 3' CCA end + 3 diphosphate. The catalysed reaction is a tRNA with a 3' CCA end + 2 CTP + ATP = a tRNA with a 3' CCACCA end + 3 diphosphate. In terms of biological role, catalyzes the addition and repair of the essential 3'-terminal CCA sequence in tRNAs without using a nucleic acid template. Adds these three nucleotides in the order of C, C, and A to the tRNA nucleotide-73, using CTP and ATP as substrates and producing inorganic pyrophosphate. tRNA 3'-terminal CCA addition is required both for tRNA processing and repair. Also involved in tRNA surveillance by mediating tandem CCA addition to generate a CCACCA at the 3' terminus of unstable tRNAs. While stable tRNAs receive only 3'-terminal CCA, unstable tRNAs are marked with CCACCA and rapidly degraded. In Methanococcus maripaludis (strain C7 / ATCC BAA-1331), this protein is CCA-adding enzyme.